The following is a 161-amino-acid chain: Ubiquitin D (161 aa).

Ubiquitin-like domains lie at Ser-3–Val-77 and Leu-86–Ile-159.

Belongs to the ubiquitin D family. In terms of assembly, interacts directly with the 26S proteasome. Interacts with NUB1; this interaction facilitates the linking of UBD-conjugated target protein to the proteasome complex and accelerates its own degradation and that of its conjugates. Interacts (via ubiquitin-like 1 domain) with the spindle checkpoint protein MAD2L1 during mitosis. Present in aggresomes of proteasome inhibited cells. Interacts with HDAC6 under proteasome impairment conditions. Forms a thioester with UBA6 in cells stimulated with tumor necrosis factor-alpha (TNFa) and interferon-gamma (IFNg). Interacts with SQSTM1 and TP53/p53. Can be acetylated.

It localises to the nucleus. It is found in the cytoplasm. Its function is as follows. Ubiquitin-like protein modifier which can be covalently attached to target proteins and subsequently leads to their degradation by the 26S proteasome, in a NUB1-dependent manner. Conjugation to the target protein is activated by UBA6 via adenylation of its C-terminal glycine. Probably functions as a survival factor. Promotes the expression of the proteasome subunit beta type-9 (PSMB9/LMP2). Regulates TNF-alpha-induced and LPS-mediated activation of the central mediator of innate immunity NF-kappa-B by promoting TNF-alpha-mediated proteasomal degradation of ubiquitinated-I-kappa-B-alpha. Required for TNF-alpha-induced p65 nuclear translocation in renal tubular epithelial cells (RTECs). May be involved in dendritic cell (DC) maturation, the process by which immature dendritic cells differentiate into fully competent antigen-presenting cells that initiate T-cell responses. Mediates mitotic non-disjunction and chromosome instability, in long-term in vitro culture and cancers, by abbreviating mitotic phase and impairing the kinetochore localization of MAD2L1 during the prometaphase stage of the cell cycle. May be involved in the formation of aggresomes when proteasome is saturated or impaired. Mediates apoptosis in a caspase-dependent manner, especially in renal epithelium and tubular cells during renal diseases. The sequence is that of Ubiquitin D (Ubd) from Rattus norvegicus (Rat).